The following is a 77-amino-acid chain: Small ribosomal subunit protein uS17 (77 aa).

This sequence belongs to the universal ribosomal protein uS17 family. As to quaternary structure, part of the 30S ribosomal subunit.

In terms of biological role, one of the primary rRNA binding proteins, it binds specifically to the 5'-end of 16S ribosomal RNA. This is Small ribosomal subunit protein uS17 from Rickettsia rickettsii (strain Sheila Smith).